The following is a 225-amino-acid chain: UPF0758 protein BAMEG_4721 (225 aa).

In terms of domain architecture, MPN spans 103-225 (SIRSPEDCAT…FVSLKEKGHI (123 aa)). Zn(2+)-binding residues include histidine 174, histidine 176, and aspartate 187. The JAMM motif motif lies at 174 to 187 (HNHPSGDPAPSRED).

The protein belongs to the UPF0758 family.

The chain is UPF0758 protein BAMEG_4721 from Bacillus anthracis (strain CDC 684 / NRRL 3495).